The following is a 142-amino-acid chain: Large ribosomal subunit protein uL13 (142 aa).

Belongs to the universal ribosomal protein uL13 family. In terms of assembly, part of the 50S ribosomal subunit.

This protein is one of the early assembly proteins of the 50S ribosomal subunit, although it is not seen to bind rRNA by itself. It is important during the early stages of 50S assembly. This is Large ribosomal subunit protein uL13 from Coxiella burnetii (strain CbuG_Q212) (Coxiella burnetii (strain Q212)).